The primary structure comprises 150 residues: Transcription antitermination protein NusB (150 aa).

It belongs to the NusB family.

Involved in transcription antitermination. Required for transcription of ribosomal RNA (rRNA) genes. Binds specifically to the boxA antiterminator sequence of the ribosomal RNA (rrn) operons. The sequence is that of Transcription antitermination protein NusB from Streptococcus pyogenes serotype M3 (strain ATCC BAA-595 / MGAS315).